The primary structure comprises 419 residues: Serine hydroxymethyltransferase (419 aa).

(6S)-5,6,7,8-tetrahydrofolate-binding positions include Leu-118 and Gly-122–Leu-124. The residue at position 227 (Lys-227) is an N6-(pyridoxal phosphate)lysine.

This sequence belongs to the SHMT family. As to quaternary structure, homodimer. The cofactor is pyridoxal 5'-phosphate.

It is found in the cytoplasm. It catalyses the reaction (6R)-5,10-methylene-5,6,7,8-tetrahydrofolate + glycine + H2O = (6S)-5,6,7,8-tetrahydrofolate + L-serine. It participates in one-carbon metabolism; tetrahydrofolate interconversion. It functions in the pathway amino-acid biosynthesis; glycine biosynthesis; glycine from L-serine: step 1/1. Catalyzes the reversible interconversion of serine and glycine with tetrahydrofolate (THF) serving as the one-carbon carrier. This reaction serves as the major source of one-carbon groups required for the biosynthesis of purines, thymidylate, methionine, and other important biomolecules. Also exhibits THF-independent aldolase activity toward beta-hydroxyamino acids, producing glycine and aldehydes, via a retro-aldol mechanism. The chain is Serine hydroxymethyltransferase from Chloroflexus aurantiacus (strain ATCC 29364 / DSM 637 / Y-400-fl).